We begin with the raw amino-acid sequence, 184 residues long: ATP-dependent protease subunit HslV (184 aa).

Thr12 is an active-site residue. Na(+)-binding residues include Ala166, Cys169, and Thr172.

It belongs to the peptidase T1B family. HslV subfamily. A double ring-shaped homohexamer of HslV is capped on each side by a ring-shaped HslU homohexamer. The assembly of the HslU/HslV complex is dependent on binding of ATP.

The protein resides in the cytoplasm. The enzyme catalyses ATP-dependent cleavage of peptide bonds with broad specificity.. With respect to regulation, allosterically activated by HslU binding. Its function is as follows. Protease subunit of a proteasome-like degradation complex believed to be a general protein degrading machinery. The chain is ATP-dependent protease subunit HslV from Brucella anthropi (strain ATCC 49188 / DSM 6882 / CCUG 24695 / JCM 21032 / LMG 3331 / NBRC 15819 / NCTC 12168 / Alc 37) (Ochrobactrum anthropi).